A 487-amino-acid chain; its full sequence is N-succinylglutamate 5-semialdehyde dehydrogenase (487 aa).

221–226 provides a ligand contact to NAD(+); the sequence is GSSRTG. Catalysis depends on residues glutamate 244 and cysteine 278.

The protein belongs to the aldehyde dehydrogenase family. AstD subfamily.

The enzyme catalyses N-succinyl-L-glutamate 5-semialdehyde + NAD(+) + H2O = N-succinyl-L-glutamate + NADH + 2 H(+). The protein operates within amino-acid degradation; L-arginine degradation via AST pathway; L-glutamate and succinate from L-arginine: step 4/5. Functionally, catalyzes the NAD-dependent reduction of succinylglutamate semialdehyde into succinylglutamate. This Pseudomonas putida (strain ATCC 47054 / DSM 6125 / CFBP 8728 / NCIMB 11950 / KT2440) protein is N-succinylglutamate 5-semialdehyde dehydrogenase.